The primary structure comprises 408 residues: Succinylornithine transaminase (408 aa).

An N6-(pyridoxal phosphate)lysine modification is found at Lys-252.

The protein belongs to the class-III pyridoxal-phosphate-dependent aminotransferase family. AstC subfamily. Requires pyridoxal 5'-phosphate as cofactor.

It catalyses the reaction N(2)-succinyl-L-ornithine + 2-oxoglutarate = N-succinyl-L-glutamate 5-semialdehyde + L-glutamate. The protein operates within amino-acid degradation; L-arginine degradation via AST pathway; L-glutamate and succinate from L-arginine: step 3/5. Catalyzes the transamination of N(2)-succinylornithine and alpha-ketoglutarate into N(2)-succinylglutamate semialdehyde and glutamate. Can also act as an acetylornithine aminotransferase. This Salmonella newport (strain SL254) protein is Succinylornithine transaminase.